A 139-amino-acid polypeptide reads, in one-letter code: MRFTPILRQIPKLKLSEVLVKAGDGVPTGLAGIYKHPNPRPALVTLYNETLKTLKENFPADSVYRQSTEALTQNRLMIVESEEIVENIENQIGGGLIEEIVIQAADELSLASQLGGLKVWEELEEKPLDDQWVYFGKKI.

This sequence belongs to the complex I NDUFA5 subunit family.

It localises to the mitochondrion inner membrane. In terms of biological role, accessory subunit of the mitochondrial membrane respiratory chain NADH dehydrogenase (Complex I), that is believed not to be involved in catalysis. Complex I functions in the transfer of electrons from NADH to the respiratory chain. The immediate electron acceptor for the enzyme is believed to be ubiquinone. Involved in osmotic and oxidative resistance, yeast to hypha transition and the ability to damage and invade oral epithelial cells. In Candida albicans (strain SC5314 / ATCC MYA-2876) (Yeast), this protein is NADH dehydrogenase [ubiquinone] 1 alpha subcomplex subunit MCI4.